A 253-amino-acid chain; its full sequence is 5'-nucleotidase SurE (253 aa).

A divalent metal cation-binding residues include aspartate 8, aspartate 9, serine 39, and asparagine 97.

The protein belongs to the SurE nucleotidase family. It depends on a divalent metal cation as a cofactor.

The protein localises to the cytoplasm. The catalysed reaction is a ribonucleoside 5'-phosphate + H2O = a ribonucleoside + phosphate. Its function is as follows. Nucleotidase that shows phosphatase activity on nucleoside 5'-monophosphates. The protein is 5'-nucleotidase SurE of Aeromonas hydrophila subsp. hydrophila (strain ATCC 7966 / DSM 30187 / BCRC 13018 / CCUG 14551 / JCM 1027 / KCTC 2358 / NCIMB 9240 / NCTC 8049).